We begin with the raw amino-acid sequence, 845 residues long: Receptor-like protein Cf-9 homolog (845 aa).

Positions 1–19 (MGCVKLVFFMLLKLDLLEF) are cleaved as a signal peptide. Positions 20 to 70 (KNMFTVNPNASDYCYDYTDQRMQSYPRTLFWNKSTDCCSWDGIHCDETTGQ) are N-cap. Over 20 to 794 (KNMFTVNPNA…EEDSPMISWQ (775 aa)) the chain is Extracellular. 3 N-linked (GlcNAc...) asparagine glycosylation sites follow: Asn-28, Asn-51, and Asn-88. The stretch at 71 to 94 (VVELDLRCSQLQGKFHSNSSLFQL) is one LRR 1; degenerate repeat. 25 LRR repeats span residues 95-118 (SNLK…KFGE), 119-143 (FSDL…ISHL), 144-171 (SKLH…LKNL), 172-193 (TQLR…SNFS), 194-217 (SHLT…VFHL), 219-242 (DLEF…KWNS), 244-266 (ASLM…SFSH), 267-291 (LTSL…LWNL), 292-316 (TNIE…RFEK), 318-338 (KRLS…SFNR), 340-364 (WTQL…VSGL), 365-388 (QNLG…IFSL), 390-410 (SLVV…EFKS), 411-434 (KTLS…LLNQ), 436-458 (SLQF…ICNL), 459-482 (KTLM…VGER), 484-506 (EYLL…TFSI), 507-531 (GNSF…LINC), 532-554 (KYLK…WLGY), 555-579 (LSQL…GSTN), 581-605 (FMRL…ILGN), 649-672 (LDSN…IIGD), 673-696 (LVGL…SFQN), 698-721 (SVLE…LASL), and 723-741 (FLEV…IPKG). N-linked (GlcNAc...) asparagine glycosylation is found at Asn-131, Asn-170, Asn-183, and Asn-191. An N-linked (GlcNAc...) asparagine glycan is attached at Asn-241. N-linked (GlcNAc...) asparagine glycans are attached at residues Asn-279 and Asn-290. 4 N-linked (GlcNAc...) asparagine glycosylation sites follow: Asn-337, Asn-360, Asn-378, and Asn-398. A glycan (N-linked (GlcNAc...) asparagine) is linked at Asn-446. Asn-501 is a glycosylation site (N-linked (GlcNAc...) asparagine). Residue Asn-545 is glycosylated (N-linked (GlcNAc...) asparagine). Residues Asn-656, Asn-680, and Asn-696 are each glycosylated (N-linked (GlcNAc...) asparagine). 2 N-linked (GlcNAc...) asparagine glycosylation sites follow: Asn-728 and Asn-749. Positions 742–794 (KQFDSFGNTSYQGNDGLRGFPLSKLCGVDDQVTTPAELDQEEEEEDSPMISWQ) are C-cap/acidic domain. The chain crosses the membrane as a helical span at residues 795-815 (GVLVGYGCGLVIGLSVIYIMW). At 816–845 (STQYPAWFSRMDLKLEHIITTRMKKHKKRY) the chain is on the cytoplasmic side.

This sequence belongs to the RLP family.

The protein localises to the cell membrane. At the opposite of its homolog Cf-9 found in S.pimpinellifolium, was not able to confer resistance to the fungal pathogen C.fulvum. The sequence is that of Receptor-like protein Cf-9 homolog from Solanum lycopersicum (Tomato).